A 156-amino-acid chain; its full sequence is Small ribosomal subunit protein uS7 (156 aa).

The protein belongs to the universal ribosomal protein uS7 family. Part of the 30S ribosomal subunit. Contacts proteins S9 and S11.

Functionally, one of the primary rRNA binding proteins, it binds directly to 16S rRNA where it nucleates assembly of the head domain of the 30S subunit. Is located at the subunit interface close to the decoding center, probably blocks exit of the E-site tRNA. The protein is Small ribosomal subunit protein uS7 of Pseudomonas aeruginosa (strain LESB58).